The sequence spans 241 residues: Small ribosomal subunit protein uS2 (241 aa).

This sequence belongs to the universal ribosomal protein uS2 family.

This chain is Small ribosomal subunit protein uS2, found in Yersinia enterocolitica serotype O:8 / biotype 1B (strain NCTC 13174 / 8081).